Reading from the N-terminus, the 200-residue chain is Interferon lambda-2 (200 aa).

An N-terminal signal peptide occupies residues 1–25 (MKLDMTGDCTPVLVLMAAVLTVTGA).

It belongs to the lambda interferon family.

The protein localises to the secreted. Its function is as follows. Cytokine with antiviral, antitumour and immunomodulatory activities. Plays a critical role in the antiviral host defense, predominantly in the epithelial tissues. Acts as a ligand for the heterodimeric class II cytokine receptor composed of IL10RB and IFNLR1, and receptor engagement leads to the activation of the JAK/STAT signaling pathway resulting in the expression of IFN-stimulated genes (ISG), which mediate the antiviral state. Has a restricted receptor distribution and therefore restricted targets: is primarily active in epithelial cells and this cell type-selective action is because of the epithelial cell-specific expression of its receptor IFNLR1. Seems not to be essential for early virus-activated host defense in vaginal infection, but plays an important role in Toll-like receptor (TLR)-induced antiviral defense. Plays a significant role in the antiviral immune defense in the intestinal epithelium. Exerts an immunomodulatory effect by up-regulating MHC class I antigen expression. The sequence is that of Interferon lambda-2 (IFNL2) from Homo sapiens (Human).